Consider the following 337-residue polypeptide: PHD finger protein 11 (337 aa).

The segment at 25–61 (KRTCALCPEGHEWSQIYFSPSGNIVAHENCLLYSSGL) adopts a C2HC pre-PHD-type zinc-finger fold. The PHD-type zinc-finger motif lies at 91–143 (LKCSFCNKGGATVGCDLWFCKKSYHYVCAKKDQAILQVDGNHGTYKLFCPEHS). 2 disordered regions span residues 145-196 (EQEE…HGHT) and 301-337 (GDLD…GDSL). The span at 187 to 196 (HMTEEPHGHT) shows a compositional bias: basic and acidic residues. Composition is skewed to polar residues over residues 301-312 (GDLDCSSSTSGS) and 323-337 (SQES…GDSL).

In terms of assembly, interacts with BRCA1 and RELA.

It localises to the nucleus. Positive regulator of Th1-type cytokine gene expression. The polypeptide is PHD finger protein 11 (Phf11) (Mus musculus (Mouse)).